The primary structure comprises 194 residues: Putative 3-methyladenine DNA glycosylase (194 aa).

This sequence belongs to the DNA glycosylase MPG family.

The sequence is that of Putative 3-methyladenine DNA glycosylase from Mycolicibacterium fortuitum (Mycobacterium fortuitum).